We begin with the raw amino-acid sequence, 1082 residues long: MTTTIGSPQMLANEERLSNEMHALKNRSEQNGQEQQGPVKNTQLHGPSATDPETTATQKESLEMVPKDTSAATMTSAPPPALPHVEINQVSLALVIRNLTVFTMKELAQYMKTNVHTQANEPNSAKKIRFLQLIIFLRTQFLKLYVLVKWTRTIKQNNFHVLIDLLNWFRTTNMNVNNCIWALKSSLNSMTNAKLPNVDLVTALEVLSLGRPNLPTHNFKLSGVSNSMDMVDGMAKVPIGLILQRLKDLNLTVSIKIALMNIPKPLNSYHIKNGRIYFTVPNEFEIQLSTVNRQSPLFFVDLKLLFNTEAEQTVSAVTEATSTNGDSENNEENSSSNGNNLPLNKPRLEKLINEILLKSNDPLLSLYNFLHKYVLTLQLYMVHREFLKLANGGKFSKSNLIHNYDSKKSTITVRYWLNGKMDSKGKITIGIQRTTESLILKWDNQSASRAKNMPVIYNNIVSNIEGILDEIMFNHARIIRSELLARDIFQEDEENSDVLLFQLPTTCVSMAPIQLKIDLLSGQFYFRNPTPLLSNYASKINRAEGPEELARILQQLKLDKIIHVLTTMFENTGWSCSRIIKIDKPIRTQVNTGGESVVKKEDNKYAIAGNSTTNSDVSLLLQRDLFIRLPHWPLNWYLILSIISSKTSCVVEKRIGKIVSQRGKWNLKYLDNSNVMTVKLESITYQKIMILQRTILNRIINHMLIDSLNQLEIRNKICSSEMINEQKLPQYIIQGSNTNDNISIITLELESFLEGSKALNSILESSMFLRIDYSNSQIRLYAKFKRNTMMIQCQIDKLYIHFVQEEPLAFYLEESFTNLGIIVQYLTKFRQKLMQLVVLTDVVERLHKNFESENFKIIALQPNEISFKYLSNNDEDDKDCTIKISTNDDSIKNLTVQLSPSNPQHIIQPFLDNSKMDYHFIFSYLQFTSSLFKALKVILNERGGKFHESGSQYSTMVNIGLHNLNEYQIVYYNPQAGTKITICIELKTVLHNGRDKIQFHIHFADVAHITTKSPAYPMMHQVRNQVFMLDTKRLGTPESVKPANASHAIRLGNGVACDPSEIEPILMEIHNILKVDSNSSSS.

2 disordered regions span residues M1 to P80 and E319 to L343. T2 carries the N-acetylthreonine modification. S7 carries the post-translational modification Phosphoserine. Positions N13 to S28 are enriched in basic and acidic residues. Polar residues predominate over residues E29 to K59. Positions T321–N340 are enriched in low complexity. T1036 bears the Phosphothreonine mark.

It belongs to the Mediator complex subunit 14 family. Component of the Mediator complex, which is composed of at least 21 subunits that form three structurally distinct submodules. The Mediator head module contains MED6, MED8, MED11, SRB4/MED17, SRB5/MED18, ROX3/MED19, SRB2/MED20 and SRB6/MED22, the middle module contains MED1, MED4, NUT1/MED5, MED7, CSE2/MED9, NUT2/MED10, SRB7/MED21 and SOH1/MED31, and the tail module contains MED2, PGD1/MED3, RGR1/MED14, GAL11/MED15 and SIN4/MED16. The head and the middle modules interact directly with RNA polymerase II, whereas the elongated tail module interacts with gene-specific regulatory proteins.

Its subcellular location is the nucleus. Component of the Mediator complex, a coactivator involved in the regulated transcription of nearly all RNA polymerase II-dependent genes. Mediator functions as a bridge to convey information from gene-specific regulatory proteins to the basal RNA polymerase II transcription machinery. The Mediator complex, having a compact conformation in its free form, is recruited to promoters by direct interactions with regulatory proteins and serves for the assembly of a functional preinitiation complex with RNA polymerase II and the general transcription factors. The Mediator complex unfolds to an extended conformation and partially surrounds RNA polymerase II, specifically interacting with the unphosphorylated form of the C-terminal domain (CTD) of RNA polymerase II. The Mediator complex dissociates from the RNA polymerase II holoenzyme and stays at the promoter when transcriptional elongation begins. The protein is Mediator of RNA polymerase II transcription subunit 14 (RGR1) of Saccharomyces cerevisiae (strain ATCC 204508 / S288c) (Baker's yeast).